Consider the following 134-residue polypeptide: Putative toxin MJ0605 (134 aa).

The protein belongs to the UPF0332 family.

Putative toxin component of a putative type VII toxin-antitoxin (TA) system. Its cognate antitoxin might be MJ0604. The chain is Putative toxin MJ0605 from Methanocaldococcus jannaschii (strain ATCC 43067 / DSM 2661 / JAL-1 / JCM 10045 / NBRC 100440) (Methanococcus jannaschii).